A 213-amino-acid polypeptide reads, in one-letter code: Thiamine-phosphate synthase (213 aa).

4-amino-2-methyl-5-(diphosphooxymethyl)pyrimidine-binding positions include 40 to 44 and Asn-72; that span reads QYRDK. Mg(2+) contacts are provided by Asp-73 and Asp-91. Thr-110 provides a ligand contact to 4-amino-2-methyl-5-(diphosphooxymethyl)pyrimidine. 137–139 provides a ligand contact to 2-[(2R,5Z)-2-carboxy-4-methylthiazol-5(2H)-ylidene]ethyl phosphate; sequence SHT. Lys-140 is a binding site for 4-amino-2-methyl-5-(diphosphooxymethyl)pyrimidine. Gly-167 is a 2-[(2R,5Z)-2-carboxy-4-methylthiazol-5(2H)-ylidene]ethyl phosphate binding site.

The protein belongs to the thiamine-phosphate synthase family. Mg(2+) serves as cofactor.

It catalyses the reaction 2-[(2R,5Z)-2-carboxy-4-methylthiazol-5(2H)-ylidene]ethyl phosphate + 4-amino-2-methyl-5-(diphosphooxymethyl)pyrimidine + 2 H(+) = thiamine phosphate + CO2 + diphosphate. The enzyme catalyses 2-(2-carboxy-4-methylthiazol-5-yl)ethyl phosphate + 4-amino-2-methyl-5-(diphosphooxymethyl)pyrimidine + 2 H(+) = thiamine phosphate + CO2 + diphosphate. It carries out the reaction 4-methyl-5-(2-phosphooxyethyl)-thiazole + 4-amino-2-methyl-5-(diphosphooxymethyl)pyrimidine + H(+) = thiamine phosphate + diphosphate. It participates in cofactor biosynthesis; thiamine diphosphate biosynthesis; thiamine phosphate from 4-amino-2-methyl-5-diphosphomethylpyrimidine and 4-methyl-5-(2-phosphoethyl)-thiazole: step 1/1. Its function is as follows. Condenses 4-methyl-5-(beta-hydroxyethyl)thiazole monophosphate (THZ-P) and 2-methyl-4-amino-5-hydroxymethyl pyrimidine pyrophosphate (HMP-PP) to form thiamine monophosphate (TMP). This Stutzerimonas stutzeri (strain A1501) (Pseudomonas stutzeri) protein is Thiamine-phosphate synthase.